The chain runs to 183 residues: Tumor necrosis factor ligand superfamily member 4 (183 aa).

Residues 1–23 (MERVQPLEENVGNAARPRFERNK) are Cytoplasmic-facing. The helical; Signal-anchor for type II membrane protein transmembrane segment at 24-50 (LLLVASVIQGLGLLLCFTYICLHFSAL) threads the bilayer. One can recognise a THD domain in the interval 51-173 (QVSHRYPRIQ…HVNGGELILI (123 aa)). Topologically, residues 51–183 (QVSHRYPRIQ…HQNPGEFCVL (133 aa)) are extracellular. 4 N-linked (GlcNAc...) asparagine glycosylation sites follow: Asn90, Asn114, Asn152, and Asn157. An intrachain disulfide couples Cys97 to Cys181.

It belongs to the tumor necrosis factor family. Homotrimer.

The protein localises to the membrane. In terms of biological role, cytokine that binds to TNFRSF4. Co-stimulates T-cell proliferation and cytokine production. The protein is Tumor necrosis factor ligand superfamily member 4 (TNFSF4) of Homo sapiens (Human).